We begin with the raw amino-acid sequence, 477 residues long: UDP-N-acetylmuramate--L-alanine ligase (477 aa).

125 to 131 is an ATP binding site; sequence GTHGKTT.

Belongs to the MurCDEF family.

The protein resides in the cytoplasm. It catalyses the reaction UDP-N-acetyl-alpha-D-muramate + L-alanine + ATP = UDP-N-acetyl-alpha-D-muramoyl-L-alanine + ADP + phosphate + H(+). The protein operates within cell wall biogenesis; peptidoglycan biosynthesis. Its function is as follows. Cell wall formation. The polypeptide is UDP-N-acetylmuramate--L-alanine ligase (Acidothermus cellulolyticus (strain ATCC 43068 / DSM 8971 / 11B)).